A 513-amino-acid chain; its full sequence is Probable hydrolase YhcX (513 aa).

An N-acetyltransferase domain is found at Met-14–Val-212. A CN hydrolase domain is found at Val-229–Leu-484. Glu-270 functions as the Proton acceptor in the catalytic mechanism. Lys-345 (proton donor) is an active-site residue. The active-site Nucleophile is the Cys-379.

Belongs to the carbon-nitrogen hydrolase superfamily. NIT1/NIT2 family.

This Bacillus subtilis (strain 168) protein is Probable hydrolase YhcX (yhcX).